The chain runs to 140 residues: Putative nickel-responsive regulator 2 (140 aa).

The Ni(2+) site is built by His77, His88, His90, and Cys96.

The protein belongs to the transcriptional regulatory CopG/NikR family. The cofactor is Ni(2+).

Functionally, transcriptional regulator. The protein is Putative nickel-responsive regulator 2 of Methanothermobacter thermautotrophicus (strain ATCC 29096 / DSM 1053 / JCM 10044 / NBRC 100330 / Delta H) (Methanobacterium thermoautotrophicum).